A 332-amino-acid chain; its full sequence is SLAM family member 6 (332 aa).

The N-terminal stretch at M1 to S21 is a signal peptide. Over Q22–M226 the chain is Extracellular. The 86-residue stretch at G35–S120 folds into the Ig-like V-type domain. N-linked (GlcNAc...) asparagine glycans are attached at residues N58, N87, N137, N144, N161, N178, and N203. One can recognise an Ig-like C2-type domain in the interval N132–S209. Intrachain disulfides connect C147-C214 and C153-C195. The helical transmembrane segment at I227–V247 threads the bilayer. The Cytoplasmic segment spans residues L248–V331. The residue at position 274 (Y274) is a Phosphotyrosine. S278 is subject to Phosphoserine. 2 short sequence motifs (ITSM) span residues T283–V288 and T307–I312. At Y309 the chain carries Phosphotyrosine.

Homodimer. Interacts with PTN6. Interacts (phosphorylated) with PTN11. Interacts (phosphorylated on tyrosine residues) with SH2D1A/SAP and SH2D1B/EAT2; SH2D1A and SH2D1B can associate with the same SLAMF6 molecule; interaction with SH2D1B is mediated by ITSM 2. Post-translationally, phosphorylation in NK cells upon engagment by SLAMF6-expressing target cells is leading to receptor activation. In terms of tissue distribution, expressed by all (resting and activated) natural killer cells (NK), T- and B-lymphocytes. Increased surface expression on T-cells of systemic lupus erythematosus (SLE) patients.

It is found in the cell membrane. In terms of biological role, self-ligand receptor of the signaling lymphocytic activation molecule (SLAM) family. SLAM receptors triggered by homo- or heterotypic cell-cell interactions are modulating the activation and differentiation of a wide variety of immune cells and thus are involved in the regulation and interconnection of both innate and adaptive immune response. Activities are controlled by presence or absence of small cytoplasmic adapter proteins, SH2D1A/SAP and/or SH2D1B/EAT-2. Triggers cytolytic activity only in natural killer cells (NK) expressing high surface densities of natural cytotoxicity receptors. Positive signaling in NK cells implicates phosphorylation of VAV1. NK cell activation seems to depend on SH2D1B and not on SH2D1A. In conjunction with SLAMF1 controls the transition between positive selection and the subsequent expansion and differentiation of the thymocytic natural killer T (NKT) cell lineage. Promotes T-cell differentiation into a helper T-cell Th17 phenotype leading to increased IL-17 secretion; the costimulatory activity requires SH2D1A. Promotes recruitment of RORC to the IL-17 promoter. In conjunction with SLAMF1 and CD84/SLAMF5 may be a negative regulator of the humoral immune response. In the absence of SH2D1A/SAP can transmit negative signals to CD4(+) T-cells and NKT cells. Negatively regulates germinal center formation by inhibiting T-cell:B-cell adhesion; the function probably implicates increased association with PTPN6/SHP-1 via ITSMs in absence of SH2D1A/SAP. However, reported to be involved in maintaining B-cell tolerance in germinal centers and in preventing autoimmunity. In Homo sapiens (Human), this protein is SLAM family member 6 (SLAMF6).